An 824-amino-acid polypeptide reads, in one-letter code: Leucine--tRNA ligase (824 aa).

The 'HIGH' region motif lies at 41–51 (PYPSGTLHVGH). The short motif at 580–584 (KMSKS) is the 'KMSKS' region element. Lys583 provides a ligand contact to ATP.

Belongs to the class-I aminoacyl-tRNA synthetase family.

Its subcellular location is the cytoplasm. The enzyme catalyses tRNA(Leu) + L-leucine + ATP = L-leucyl-tRNA(Leu) + AMP + diphosphate. In Thermotoga maritima (strain ATCC 43589 / DSM 3109 / JCM 10099 / NBRC 100826 / MSB8), this protein is Leucine--tRNA ligase.